The chain runs to 343 residues: Small ribosomal subunit biogenesis GTPase RsgA (343 aa).

Residues 1–32 are disordered; it reads MAKRRLSKRQVDRIRERQSQRLDTSVAAPDGK. The span at 9–20 shows a compositional bias: basic and acidic residues; it reads RQVDRIRERQSQ. Residues 109-273 form the CP-type G domain; that stretch reads YGKLKPVAAN…CIDSPGIREF (165 aa). GTP is bound by residues 156–159 and 215–223; these read NKLD and GQSGVGKSS. Positions 297, 302, 304, and 310 each coordinate Zn(2+).

This sequence belongs to the TRAFAC class YlqF/YawG GTPase family. RsgA subfamily. As to quaternary structure, monomer. Associates with 30S ribosomal subunit, binds 16S rRNA. Zn(2+) is required as a cofactor.

Its subcellular location is the cytoplasm. Functionally, one of several proteins that assist in the late maturation steps of the functional core of the 30S ribosomal subunit. Helps release RbfA from mature subunits. May play a role in the assembly of ribosomal proteins into the subunit. Circularly permuted GTPase that catalyzes slow GTP hydrolysis, GTPase activity is stimulated by the 30S ribosomal subunit. This Saccharophagus degradans (strain 2-40 / ATCC 43961 / DSM 17024) protein is Small ribosomal subunit biogenesis GTPase RsgA.